The sequence spans 469 residues: Argininosuccinate lyase (469 aa).

Belongs to the lyase 1 family. Argininosuccinate lyase subfamily.

The protein localises to the cytoplasm. The enzyme catalyses 2-(N(omega)-L-arginino)succinate = fumarate + L-arginine. It participates in amino-acid biosynthesis; L-arginine biosynthesis; L-arginine from L-ornithine and carbamoyl phosphate: step 3/3. The chain is Argininosuccinate lyase from Burkholderia orbicola (strain MC0-3).